The chain runs to 353 residues: Fe(3+) ions import ATP-binding protein FbpC (353 aa).

An ABC transporter domain is found at 9-239 (VTFENVTKKF…PASAFIADFM (231 aa)). 41–48 (GLSGCGKT) is an ATP binding site.

The protein belongs to the ABC transporter superfamily. Fe(3+) ion importer (TC 3.A.1.10) family. The complex is composed of two ATP-binding proteins (FbpC), two transmembrane proteins (FbpB) and a solute-binding protein (FbpA).

It is found in the cell inner membrane. It catalyses the reaction Fe(3+)(out) + ATP + H2O = Fe(3+)(in) + ADP + phosphate + H(+). Its function is as follows. Part of the ABC transporter complex FbpABC involved in Fe(3+) ions import. Responsible for energy coupling to the transport system. This chain is Fe(3+) ions import ATP-binding protein FbpC, found in Brucella melitensis biotype 1 (strain ATCC 23456 / CCUG 17765 / NCTC 10094 / 16M).